A 479-amino-acid polypeptide reads, in one-letter code: MNLTQIWKATLSALQTQTSRHDYEALLRPATLLSLDNGAAFIGVSSPGQKEGLENRLLMPLRNALARVVGYPVQVQVLIANLNSRTEPSPSLTLSNGSRLMSDPEPVVAETPAPALTPGNGTGERVVQLDLASAMRSGMLNPRYTFSSFIVGSSNRLAHAACLAVADNPGQAYNPLFLYGGVGLGKTHLLHAIGNRVLDRDPEINVLYVSSEKFTNDLINAIRRQQTEEFRMRYRNIDVLLIDDIQFIAGKDATQEEFFHTFNTLHSAAKHIVISSDRPPKAILTLEERLRSRFEWGLIVDVQPPDLETRTAILRAKAEQMSVHVPDEVIDFLAHKIQSNIRELEGSLNRVAAYAELNRAPITIETATAALADLLGNQRRRRISAEAILQIVSEHYGIEVEQLRARNRSRHVVVPRQVAMYLLREETESSLVDIGNLLGGRDHTTVMYGCEKIAEEINSDSRLRSEVMAIRERIQMLRG.

Positions 1–71 (MNLTQIWKAT…RNALARVVGY (71 aa)) are domain I, interacts with DnaA modulators. The segment at 71–138 (YPVQVQVLIA…LDLASAMRSG (68 aa)) is domain II. Over residues 86-99 (TEPSPSLTLSNGSR) the composition is skewed to polar residues. The segment at 86 to 106 (TEPSPSLTLSNGSRLMSDPEP) is disordered. Residues 139-355 (MLNPRYTFSS…GSLNRVAAYA (217 aa)) form a domain III, AAA+ region region. 4 residues coordinate ATP: Gly183, Gly185, Lys186, and Thr187. Residues 356-479 (ELNRAPITIE…IRERIQMLRG (124 aa)) are domain IV, binds dsDNA.

It belongs to the DnaA family. Oligomerizes as a right-handed, spiral filament on DNA at oriC.

The protein resides in the cytoplasm. Its function is as follows. Plays an essential role in the initiation and regulation of chromosomal replication. ATP-DnaA binds to the origin of replication (oriC) to initiate formation of the DNA replication initiation complex once per cell cycle. Binds the DnaA box (a 9 base pair repeat at the origin) and separates the double-stranded (ds)DNA. Forms a right-handed helical filament on oriC DNA; dsDNA binds to the exterior of the filament while single-stranded (ss)DNA is stabiized in the filament's interior. The ATP-DnaA-oriC complex binds and stabilizes one strand of the AT-rich DNA unwinding element (DUE), permitting loading of DNA polymerase. After initiation quickly degrades to an ADP-DnaA complex that is not apt for DNA replication. Binds acidic phospholipids. This is Chromosomal replication initiator protein DnaA from Chloroflexus aurantiacus (strain ATCC 29366 / DSM 635 / J-10-fl).